The following is a 738-amino-acid chain: Probable trehalase (738 aa).

Residues 1–44 form a disordered region; the sequence is MLQGMPKRSGSISELHDPFSSPDVYYGPATDPRRQKQPNKYSRT. Substrate contacts are provided by residues R289, 296-297, N333, R342, 342-344, and G463; these read WD and RSQ. Active-site proton donor/acceptor residues include D465 and E660.

Belongs to the glycosyl hydrolase 37 family.

The catalysed reaction is alpha,alpha-trehalose + H2O = alpha-D-glucose + beta-D-glucose. The protein is Probable trehalase (NTH2) of Eremothecium gossypii (strain ATCC 10895 / CBS 109.51 / FGSC 9923 / NRRL Y-1056) (Yeast).